We begin with the raw amino-acid sequence, 159 residues long: Ribosomal RNA large subunit methyltransferase H (159 aa).

S-adenosyl-L-methionine contacts are provided by residues Leu-76, Gly-108, and 127 to 132; that span reads FGLLTL.

It belongs to the RNA methyltransferase RlmH family. Homodimer.

The protein localises to the cytoplasm. It catalyses the reaction pseudouridine(1915) in 23S rRNA + S-adenosyl-L-methionine = N(3)-methylpseudouridine(1915) in 23S rRNA + S-adenosyl-L-homocysteine + H(+). Its function is as follows. Specifically methylates the pseudouridine at position 1915 (m3Psi1915) in 23S rRNA. This Streptococcus pyogenes serotype M5 (strain Manfredo) protein is Ribosomal RNA large subunit methyltransferase H.